The following is a 202-amino-acid chain: Small ribosomal subunit protein uS4 (202 aa).

A disordered region spans residues 16–43 (GELPGLSRKTPRRAYPPGQHGQGRRKRS). An S4 RNA-binding domain is found at 90–152 (MRLDNTVFRL…DNSRRMVETN (63 aa)).

It belongs to the universal ribosomal protein uS4 family. In terms of assembly, part of the 30S ribosomal subunit. Contacts protein S5. The interaction surface between S4 and S5 is involved in control of translational fidelity.

Its function is as follows. One of the primary rRNA binding proteins, it binds directly to 16S rRNA where it nucleates assembly of the body of the 30S subunit. With S5 and S12 plays an important role in translational accuracy. The polypeptide is Small ribosomal subunit protein uS4 (Crocosphaera subtropica (strain ATCC 51142 / BH68) (Cyanothece sp. (strain ATCC 51142))).